Reading from the N-terminus, the 226-residue chain is Leucyl/phenylalanyl-tRNA--protein transferase (226 aa).

It belongs to the L/F-transferase family.

It is found in the cytoplasm. The enzyme catalyses N-terminal L-lysyl-[protein] + L-leucyl-tRNA(Leu) = N-terminal L-leucyl-L-lysyl-[protein] + tRNA(Leu) + H(+). The catalysed reaction is N-terminal L-arginyl-[protein] + L-leucyl-tRNA(Leu) = N-terminal L-leucyl-L-arginyl-[protein] + tRNA(Leu) + H(+). It carries out the reaction L-phenylalanyl-tRNA(Phe) + an N-terminal L-alpha-aminoacyl-[protein] = an N-terminal L-phenylalanyl-L-alpha-aminoacyl-[protein] + tRNA(Phe). Its function is as follows. Functions in the N-end rule pathway of protein degradation where it conjugates Leu, Phe and, less efficiently, Met from aminoacyl-tRNAs to the N-termini of proteins containing an N-terminal arginine or lysine. This is Leucyl/phenylalanyl-tRNA--protein transferase from Pseudomonas fluorescens (strain Pf0-1).